The sequence spans 661 residues: Methyl-accepting chemotaxis protein McpA (661 aa).

Residues 1–16 (MKKILQLIKQRSITRK) lie on the Cytoplasmic side of the membrane. A helical membrane pass occupies residues 17–37 (LLVSFLSILIIPVVILAIFAY). The Extracellular portion of the chain corresponds to 38–281 (QSASSSLDRQ…IHEAAQPVLH (244 aa)). One can recognise a Cache domain in the interval 152–228 (ITDPYKTAST…QSGTELKGDW (77 aa)). Residues 282–302 (LALIVLAAAIIIGIIVMTLII) form a helical membrane-spanning segment. An HAMP domain is found at 303-355 (RSITTPLKQLVGSSKRISEGDLTETIDIRSKDELGELGKSFNNMASSLRSLIH). The Cytoplasmic portion of the chain corresponds to 303–661 (RSITTPLKQL…RDMTKRFKIE (359 aa)). Residue Glu370 is modified to Glutamate methyl ester (Glu). In terms of domain architecture, Methyl-accepting transducer spans 374 to 610 (SAAQTSKATE…EVSGASEHIA (237 aa)). 2 positions are modified to deamidated glutamine: Gln593 and Gln594. Gln594 is subject to Glutamate methyl ester (Gln). Glutamate methyl ester (Glu) is present on residues Glu629 and Glu636.

This sequence belongs to the methyl-accepting chemotaxis (MCP) protein family. In terms of assembly, interacts with FloT. Post-translationally, deamidated by CheD on Gln-593 and Gln-594, producing glutamate residues. The glutamate residues are then methylated. Other additional sites are deamidated and methylated as well.

It localises to the cell membrane. Its subcellular location is the membrane raft. Chemotactic-signal transducers respond to changes in the concentration of attractants and repellents in the environment, transduce a signal from the outside to the inside of the cell, and facilitate sensory adaptation through the variation of the level of methylation. All amino acids serve as attractants in B.subtilis, they appear to cause an increase in the turnover methyl groups, leading to methylation of an unidentified acceptor, while repellents have been shown to cause a decrease in methyl group turnover. The methyl groups are added by a methyltransferase and removed by a methylesterase. McpA is required for taxis towards glucose and alpha-methylglucoside. The sequence is that of Methyl-accepting chemotaxis protein McpA (mcpA) from Bacillus subtilis (strain 168).